A 373-amino-acid polypeptide reads, in one-letter code: Dual-specificity RNA methyltransferase RlmN (373 aa).

E94 (proton acceptor) is an active-site residue. The Radical SAM core domain maps to 100 to 339; the sequence is EDDRATLCVS…VIVRKTRGDD (240 aa). C107 and C344 form a disulfide bridge. [4Fe-4S] cluster-binding residues include C114, C118, and C121. Residues 168–169, S200, 222–224, and N301 contribute to the S-adenosyl-L-methionine site; these read GE and SIH. Residue C344 is the S-methylcysteine intermediate of the active site.

Belongs to the radical SAM superfamily. RlmN family. [4Fe-4S] cluster is required as a cofactor.

It localises to the cytoplasm. It catalyses the reaction adenosine(2503) in 23S rRNA + 2 reduced [2Fe-2S]-[ferredoxin] + 2 S-adenosyl-L-methionine = 2-methyladenosine(2503) in 23S rRNA + 5'-deoxyadenosine + L-methionine + 2 oxidized [2Fe-2S]-[ferredoxin] + S-adenosyl-L-homocysteine. The catalysed reaction is adenosine(37) in tRNA + 2 reduced [2Fe-2S]-[ferredoxin] + 2 S-adenosyl-L-methionine = 2-methyladenosine(37) in tRNA + 5'-deoxyadenosine + L-methionine + 2 oxidized [2Fe-2S]-[ferredoxin] + S-adenosyl-L-homocysteine. Specifically methylates position 2 of adenine 2503 in 23S rRNA and position 2 of adenine 37 in tRNAs. m2A2503 modification seems to play a crucial role in the proofreading step occurring at the peptidyl transferase center and thus would serve to optimize ribosomal fidelity. The sequence is that of Dual-specificity RNA methyltransferase RlmN from Shewanella baltica (strain OS155 / ATCC BAA-1091).